The primary structure comprises 1213 residues: DNA-directed RNA polymerase subunit beta' (1213 aa).

Zn(2+) contacts are provided by Cys60, Cys62, Cys75, and Cys78. The Mg(2+) site is built by Asp449, Asp451, and Asp453. Zn(2+) is bound by residues Cys818, Cys892, Cys899, and Cys902.

It belongs to the RNA polymerase beta' chain family. The RNAP catalytic core consists of 2 alpha, 1 beta, 1 beta' and 1 omega subunit. When a sigma factor is associated with the core the holoenzyme is formed, which can initiate transcription. It depends on Mg(2+) as a cofactor. The cofactor is Zn(2+).

It carries out the reaction RNA(n) + a ribonucleoside 5'-triphosphate = RNA(n+1) + diphosphate. Functionally, DNA-dependent RNA polymerase catalyzes the transcription of DNA into RNA using the four ribonucleoside triphosphates as substrates. The sequence is that of DNA-directed RNA polymerase subunit beta' from Lactiplantibacillus plantarum (strain ATCC BAA-793 / NCIMB 8826 / WCFS1) (Lactobacillus plantarum).